The chain runs to 409 residues: UV excision repair protein RAD23 homolog B (409 aa).

One can recognise a Ubiquitin-like domain in the interval 1–79 (MQVTLKTLQQ…VVVMVTKPKA (79 aa)). Positions 80 to 175 (VSTPAPATTQ…STSGDSSRSN (96 aa)) are disordered. Residues 81-143 (STPAPATTQQ…SSEPAPASAA (63 aa)) are compositionally biased toward low complexity. The segment covering 144 to 153 (KQEKPAEKPA) has biased composition (basic and acidic residues). At Thr-155 the chain carries Phosphothreonine. Residue Ser-160 is modified to Phosphoserine. Polar residues predominate over residues 160–175 (SPTATDSTSGDSSRSN). At Thr-164 the chain carries Phosphothreonine. Phosphoserine is present on Ser-174. Thr-186 bears the Phosphothreonine mark. The 41-residue stretch at 188 to 228 (QSYENMVTEIMSMGYEREQVIAALRASFNNPDRAVEYLLMG) folds into the UBA 1 domain. Phosphoserine is present on Ser-199. Tyr-202 carries the phosphotyrosine modification. Positions 236–276 (QAVVDPPQAASTGAPQSSAVAAAAATTTATTTTTSSGGHPL) are disordered. Low complexity predominate over residues 252-271 (SSAVAAAAATTTATTTTTSS). The STI1 domain occupies 274 to 317 (HPLEFLRNQPQFQQMRQIIQQNPSLLPALLQQIGRENPQLLQQI). The UBA 2 domain occupies 364 to 404 (PQEKEAIERLKALGFPEGLVIQAYFACEKNENLAANFLLQQ).

Belongs to the RAD23 family. As to quaternary structure, component of the XPC complex composed of XPC, RAD23B and CETN2. Interacts with NGLY1 and PSMC1. Interacts with ATXN3. Interacts with PSMD4 and PSMC5. Interacts with AMFR. Interacts with VCP; the interaction is indirect and mediated by NGLY1.

Its subcellular location is the nucleus. The protein localises to the cytoplasm. Functionally, multiubiquitin chain receptor involved in modulation of proteasomal degradation. Binds to polyubiquitin chains. Proposed to be capable to bind simultaneously to the 26S proteasome and to polyubiquitinated substrates and to deliver ubiquitinated proteins to the proteasome. May play a role in endoplasmic reticulum-associated degradation (ERAD) of misfolded glycoproteins by association with PNGase and delivering deglycosylated proteins to the proteasome. Its function is as follows. Involved in global genome nucleotide excision repair (GG-NER) by acting as component of the XPC complex. Cooperatively with CETN2 appears to stabilize XPC. May protect XPC from proteasomal degradation. The XPC complex is proposed to represent the first factor bound at the sites of DNA damage and together with other core recognition factors, XPA, RPA and the TFIIH complex, is part of the pre-incision (or initial recognition) complex. The XPC complex recognizes a wide spectrum of damaged DNA characterized by distortions of the DNA helix such as single-stranded loops, mismatched bubbles or single-stranded overhangs. The orientation of XPC complex binding appears to be crucial for inducing a productive NER. XPC complex is proposed to recognize and to interact with unpaired bases on the undamaged DNA strand which is followed by recruitment of the TFIIH complex and subsequent scanning for lesions in the opposite strand in a 5'-to-3' direction by the NER machinery. Cyclobutane pyrimidine dimers (CPDs) which are formed upon UV-induced DNA damage esacpe detection by the XPC complex due to a low degree of structural perurbation. Instead they are detected by the UV-DDB complex which in turn recruits and cooperates with the XPC complex in the respective DNA repair. In vitro, the XPC:RAD23B dimer is sufficient to initiate NER; it preferentially binds to cisplatin and UV-damaged double-stranded DNA and also binds to a variety of chemically and structurally diverse DNA adducts. XPC:RAD23B contacts DNA both 5' and 3' of a cisplatin lesion with a preference for the 5' side. XPC:RAD23B induces a bend in DNA upon binding. XPC:RAD23B stimulates the activity of DNA glycosylases TDG and SMUG1. The chain is UV excision repair protein RAD23 homolog B (RAD23B) from Homo sapiens (Human).